The following is a 70-amino-acid chain: Small ribosomal subunit protein bS21 (70 aa).

The protein belongs to the bacterial ribosomal protein bS21 family.

The polypeptide is Small ribosomal subunit protein bS21 (Nitratiruptor sp. (strain SB155-2)).